A 618-amino-acid chain; its full sequence is UvrABC system protein C (618 aa).

The GIY-YIG domain maps to Asp13 to Ile92. Residues Leu204–Ile239 form the UVR domain.

The protein belongs to the UvrC family. As to quaternary structure, interacts with UvrB in an incision complex.

The protein resides in the cytoplasm. In terms of biological role, the UvrABC repair system catalyzes the recognition and processing of DNA lesions. UvrC both incises the 5' and 3' sides of the lesion. The N-terminal half is responsible for the 3' incision and the C-terminal half is responsible for the 5' incision. The sequence is that of UvrABC system protein C from Clostridium botulinum (strain ATCC 19397 / Type A).